The primary structure comprises 483 residues: E3 ubiquitin-protein ligase TRIM50 (483 aa).

The RING-type zinc finger occupies 16–57; that stretch reads CPICLEVFKEPLMLQCGHSYCKDCLDNLSQHLDSELCCPVCR. A B box-type zinc finger spans residues 84–125; sequence IEPTVCVHHRNPLSLFCEKDQEFICGLCGLLGSHQHHRVTPV. Zn(2+) contacts are provided by Cys-89, His-92, Cys-111, and His-117. Coiled coils occupy residues 127-169 and 203-236; these read TVYS…NESD and GLVA…GNES. Residues 275–474 form the B30.2/SPRY domain; the sequence is DIKLTVWKRL…LPMVLPPPSG (200 aa). Lys-372 carries the post-translational modification N6-acetyllysine.

The protein belongs to the TRIM/RBCC family. As to quaternary structure, can form dimers and trimers. Interacts with several E2 ubiquitin-conjugating enzymes, including UBE2L6, UBE2E1, UBE2E3. No interaction with UBE2H. Interacts with BECN1. Interacts with SQSTM1. Interacts with NLRP3. In terms of processing, auto-ubiquitinated. Post-translationally, acetylated by EP300 and KAT2B. HDAC6 drives TRIM50 deacetylation. Acetylation antagonizes with TRIM50 ubiquitination. In terms of tissue distribution, expressed in the stomach.

Its subcellular location is the cytoplasm. The catalysed reaction is S-ubiquitinyl-[E2 ubiquitin-conjugating enzyme]-L-cysteine + [acceptor protein]-L-lysine = [E2 ubiquitin-conjugating enzyme]-L-cysteine + N(6)-ubiquitinyl-[acceptor protein]-L-lysine.. Its function is as follows. E3 ubiquitin-protein ligase that ubiquitinates Beclin-1/BECN1 in a 'Lys-63'-dependent manner enhancing its binding to ULK1. In turn, promotes starvation-induced autophagy activation. Also interacts with p62/SQSTM1 protein and thereby induces the formation and the autophagy clearance of aggresome-associated polyubiquitinated proteins through HDAC6 interaction. Also promotes NLRP3 inflammasome activation by directly inducing NLRP3 oligomerization independent of its E3 ligase function. The protein is E3 ubiquitin-protein ligase TRIM50 (Trim50) of Mus musculus (Mouse).